A 369-amino-acid polypeptide reads, in one-letter code: Uroporphyrinogen decarboxylase (369 aa).

Coproporphyrinogen I is bound by residues Arg-39, Ala-41, Arg-43, Arg-52, Asp-88, Tyr-166, Ser-221, and His-341. Residues Arg-39, Ala-41, and Arg-43 each contribute to the coproporphyrinogen III site. Coproporphyrinogen III-binding residues include Asp-88, Tyr-166, Ser-221, and His-341.

It belongs to the uroporphyrinogen decarboxylase family. As to quaternary structure, homodimer.

It is found in the cytoplasm. Its subcellular location is the cytosol. The enzyme catalyses uroporphyrinogen III + 4 H(+) = coproporphyrinogen III + 4 CO2. It carries out the reaction uroporphyrinogen I + 4 H(+) = coproporphyrinogen I + 4 CO2. It participates in porphyrin-containing compound metabolism; protoporphyrin-IX biosynthesis; coproporphyrinogen-III from 5-aminolevulinate: step 4/4. Catalyzes the sequential decarboxylation of the four acetate side chains of uroporphyrinogen to form coproporphyrinogen and participates in the fifth step in the heme biosynthetic pathway. Isomer I or isomer III of uroporphyrinogen may serve as substrate, but only coproporphyrinogen III can ultimately be converted to heme. In vitro also decarboxylates pentacarboxylate porphyrinogen I. This Danio rerio (Zebrafish) protein is Uroporphyrinogen decarboxylase.